Reading from the N-terminus, the 62-residue chain is UPF0434 protein Smed_3047 (62 aa).

The protein belongs to the UPF0434 family.

The chain is UPF0434 protein Smed_3047 from Sinorhizobium medicae (strain WSM419) (Ensifer medicae).